Reading from the N-terminus, the 448-residue chain is tRNA wybutosine-synthesizing protein 2 homolog (448 aa).

Residues S218, K225, E265, and 293–294 each bind S-adenosyl-L-methionine; that span reads DN.

Belongs to the class I-like SAM-binding methyltransferase superfamily. TRM5/TYW2 family.

It carries out the reaction 4-demethylwyosine(37) in tRNA(Phe) + S-adenosyl-L-methionine = 4-demethyl-7-[(3S)-3-amino-3-carboxypropyl]wyosine(37) in tRNA(Phe) + S-methyl-5'-thioadenosine + H(+). It participates in tRNA modification; wybutosine-tRNA(Phe) biosynthesis. Its function is as follows. S-adenosyl-L-methionine-dependent transferase that acts as a component of the wybutosine biosynthesis pathway. Wybutosine is a hyper modified guanosine with a tricyclic base found at the 3'-position adjacent to the anticodon of eukaryotic phenylalanine tRNA. Catalyzes the transfer of the alpha-amino-alpha-carboxypropyl (acp) group from S-adenosyl-L-methionine to the C-7 position of 4-demethylwyosine (imG-14) to produce wybutosine-86. The protein is tRNA wybutosine-synthesizing protein 2 homolog (TRMT12) of Macaca fascicularis (Crab-eating macaque).